The chain runs to 104 residues: Transcription initiation factor IIA subunit 2 (104 aa).

This sequence belongs to the TFIIA subunit 2 family. In terms of assembly, TFIIA is a heterodimer of the large unprocessed subunit 1 and a small subunit gamma.

The protein localises to the nucleus. In terms of biological role, TFIIA is a component of the transcription machinery of RNA polymerase II and plays an important role in transcriptional activation. TFIIA in a complex with TBP mediates transcriptional activity. The protein is Transcription initiation factor IIA subunit 2 of Schistosoma mansoni (Blood fluke).